The chain runs to 64 residues: Large ribosomal subunit protein bL32 (64 aa).

Residues 1–10 (MAVPKRKTTP) show a composition bias toward basic residues. Residues 1–22 (MAVPKRKTTPSKRDMRRANHDK) are disordered. Basic and acidic residues predominate over residues 11 to 22 (SKRDMRRANHDK).

Belongs to the bacterial ribosomal protein bL32 family.

This chain is Large ribosomal subunit protein bL32, found in Sorangium cellulosum (strain So ce56) (Polyangium cellulosum (strain So ce56)).